A 1399-amino-acid chain; its full sequence is MKDLLNLLKNQGQIEEFDAIRIGLASPEMIRSWSFGEVKKPETINYRTFKPERDGLFCAKIFGPVKDYECLCGKYKRLKHRGVICEKCGVEVALAKVRRERMGHIELASPVAHIWFLKSLPSRIGLLLDMTLRDIERVLYFESYVVIDPGMTTLEKGQLLNDEQYFEALEEFGDDFDARMGAEAVHELLNAIDLEHEIGRLREEIPQTNSETKIKKLSKRLKLMEAFQGSGNKPEWMVLTVLPVLPPDLRPLVPLDGGRFATSDLNDLYRRVINRNNRLKRLLDLAAPDIIVRNEKRMLQEAVDALLDNGRRGRAITGSNKRPLKSLADMIKGKQGRFRQNLLGKRVDYSGRSVITVGPTLRLHQCGLPKKMALELFKPFIFGKLEGRGMATTIKAAKKMVERELPEVWDVLAEVIREHPVLLNRAPTLHRLGIQAFEPVLIEGKAIQLHPLVCAAYNADFDGDQMAVHVPLTLEAQLEARALMMSTNNILSPANGEPIIVPSQDVVMGLYYMTREAINAKGEGMAFADLQEVDRAYRSGQASLHARVKVRINEKIKGEDGQLTANTRIVDTTVGRALLFQVVPAGLPFDVVNQSMKKKAISKLINHCYRVVGLKDTVIFADQLMYTGFAYSTISGVSIGVNDFVIPDEKARIINAATDEVKEIESQYASGLVTQGEKYNKVIDLWSKANDEVSKAMMANLSKEKVVDREGKEVDQESFNSMYMMADSGARGSAAQIRQLAGMRGLMAKPDGSIIETPITANFREGLNVLQYFISTHGARKGLADTALKTANSGYLTRRLVDVAQDLVVTEIDCGTEHGLLMSPHIEGGDVVEPLGERVLGRVIARDVFKPGSDEVIVPAGTLIDEKWVDFLEVMSVDEVVVRSPITCETRHGICAMCYGRDLARGHRVNIGEAVGVIAAQSIGEPGTQLTMRTFHIGGAASRTSAADNVQVKNGGTIRLHNLKHVVRADGALVAVSRSGELAVADDFGRERERYKLPYGAVISVKEGDKVDPGAIVAKWDPHTHPIVTEVDGTVAFVGMEEGITVKRQTDELTGLTNIEVMDPKDRPAAGKDIRPAVKLIDAAGKDLLLPGTDVPAQYFLPANALVNLTDGAKVSIGDVVARIPQETSKTRDITGGLPRVADLFEARRPKEPSILAEISGTISFGKETKGKRRLVITPNDGSDPYEELIPKWRHLNVFEGEQVNRGEVISDGPSNPHDILRLLGVSSLAKYIVNEIQDVYRLQGVKINDKHIETILRQMLRKVEVSESGDSSFIKGDQVELTQVLEENEQLGTEDKFPAKYERVLLGITKASLSTESFISAASFQETTRVLTEAAVTGKRDFLRGLKENVVVGRLIPAGTGLAYHSERKRQRDLGKPQRVSASEAEAALTEALNSSGN.

C70, C72, C85, and C88 together coordinate Zn(2+). Mg(2+) is bound by residues D460, D462, and D464. Zn(2+) is bound by residues C814, C888, C895, and C898. The disordered stretch occupies residues 1367–1399 (SERKRQRDLGKPQRVSASEAEAALTEALNSSGN). Over residues 1382–1399 (SASEAEAALTEALNSSGN) the composition is skewed to low complexity.

This sequence belongs to the RNA polymerase beta' chain family. The RNAP catalytic core consists of 2 alpha, 1 beta, 1 beta' and 1 omega subunit. When a sigma factor is associated with the core the holoenzyme is formed, which can initiate transcription. Mg(2+) is required as a cofactor. Requires Zn(2+) as cofactor.

The catalysed reaction is RNA(n) + a ribonucleoside 5'-triphosphate = RNA(n+1) + diphosphate. In terms of biological role, DNA-dependent RNA polymerase catalyzes the transcription of DNA into RNA using the four ribonucleoside triphosphates as substrates. The sequence is that of DNA-directed RNA polymerase subunit beta' from Pseudomonas aeruginosa (strain UCBPP-PA14).